The sequence spans 263 residues: Small ribosomal subunit protein uS3 (263 aa).

Positions 39-107 (VREYLKKKLK…PVHVNIEEIR (69 aa)) constitute a KH type-2 domain. The disordered stretch occupies residues 211-263 (GELPPEAATPREEERRPRRAPRGDRPDGGRPGRPGGRGRGPRKADAAPAPEGE). The span at 219–240 (TPREEERRPRRAPRGDRPDGGR) shows a compositional bias: basic and acidic residues.

It belongs to the universal ribosomal protein uS3 family. Part of the 30S ribosomal subunit. Forms a tight complex with proteins S10 and S14.

Functionally, binds the lower part of the 30S subunit head. Binds mRNA in the 70S ribosome, positioning it for translation. The polypeptide is Small ribosomal subunit protein uS3 (Bordetella petrii (strain ATCC BAA-461 / DSM 12804 / CCUG 43448)).